The following is a 953-amino-acid chain: Isoleucine--tRNA ligase (953 aa).

The 'HIGH' region signature appears at 61–71 (PYANGALHIGH). Glu-564 contributes to the L-isoleucyl-5'-AMP binding site. The 'KMSKS' region signature appears at 605–609 (KMSKS). Lys-608 provides a ligand contact to ATP. Residues Cys-922, Cys-925, Cys-942, and Cys-945 each coordinate Zn(2+).

Belongs to the class-I aminoacyl-tRNA synthetase family. IleS type 1 subfamily. As to quaternary structure, monomer. It depends on Zn(2+) as a cofactor.

It is found in the cytoplasm. The enzyme catalyses tRNA(Ile) + L-isoleucine + ATP = L-isoleucyl-tRNA(Ile) + AMP + diphosphate. Catalyzes the attachment of isoleucine to tRNA(Ile). As IleRS can inadvertently accommodate and process structurally similar amino acids such as valine, to avoid such errors it has two additional distinct tRNA(Ile)-dependent editing activities. One activity is designated as 'pretransfer' editing and involves the hydrolysis of activated Val-AMP. The other activity is designated 'posttransfer' editing and involves deacylation of mischarged Val-tRNA(Ile). This is Isoleucine--tRNA ligase from Thermosynechococcus vestitus (strain NIES-2133 / IAM M-273 / BP-1).